We begin with the raw amino-acid sequence, 290 residues long: Phosphoribosylaminoimidazole-succinocarboxamide synthase (290 aa).

The protein belongs to the SAICAR synthetase family.

It carries out the reaction 5-amino-1-(5-phospho-D-ribosyl)imidazole-4-carboxylate + L-aspartate + ATP = (2S)-2-[5-amino-1-(5-phospho-beta-D-ribosyl)imidazole-4-carboxamido]succinate + ADP + phosphate + 2 H(+). It participates in purine metabolism; IMP biosynthesis via de novo pathway; 5-amino-1-(5-phospho-D-ribosyl)imidazole-4-carboxamide from 5-amino-1-(5-phospho-D-ribosyl)imidazole-4-carboxylate: step 1/2. The sequence is that of Phosphoribosylaminoimidazole-succinocarboxamide synthase (purC) from Haemophilus influenzae (strain ATCC 51907 / DSM 11121 / KW20 / Rd).